Consider the following 185-residue polypeptide: MRCPFCGGPDTQVKDSRPSEDSSAIRRRRVCPDCGGRFTTFERVQLRELVVLKRSGKRVPFDRDKLQRSIDVALRKRTVDPERVERLVSGITRRLESGGEGEVTSEAIGEAVMEGLKGLDDVAYVRFASVYKNFREAQDFQDLLGTLGERLDGEGDLPEQGDAVPAPPDEAVAAPRRGRPARKRA.

Residues 1–24 (MRCPFCGGPDTQVKDSRPSEDSSA) are disordered. Residues 3–34 (CPFCGGPDTQVKDSRPSEDSSAIRRRRVCPDC) fold into a zinc finger. A compositionally biased stretch (basic and acidic residues) spans 12–24 (QVKDSRPSEDSSA). One can recognise an ATP-cone domain in the interval 49-139 (LVVLKRSGKR…VYKNFREAQD (91 aa)). The segment at 148 to 185 (GERLDGEGDLPEQGDAVPAPPDEAVAAPRRGRPARKRA) is disordered. A compositionally biased stretch (basic residues) spans 176–185 (RRGRPARKRA).

This sequence belongs to the NrdR family. It depends on Zn(2+) as a cofactor.

Its function is as follows. Negatively regulates transcription of bacterial ribonucleotide reductase nrd genes and operons by binding to NrdR-boxes. This chain is Transcriptional repressor NrdR, found in Methylorubrum extorquens (strain CM4 / NCIMB 13688) (Methylobacterium extorquens).